A 618-amino-acid polypeptide reads, in one-letter code: DNA mismatch repair protein MutL (618 aa).

The interval 367–402 (EPTTAREPATPRYSGGASGGNGGRQTAGGWPHAQPG) is disordered. A compositionally biased stretch (gly residues) spans 382–392 (GASGGNGGRQT).

It belongs to the DNA mismatch repair MutL/HexB family.

This protein is involved in the repair of mismatches in DNA. It is required for dam-dependent methyl-directed DNA mismatch repair. May act as a 'molecular matchmaker', a protein that promotes the formation of a stable complex between two or more DNA-binding proteins in an ATP-dependent manner without itself being part of a final effector complex. This is DNA mismatch repair protein MutL from Salmonella paratyphi A (strain ATCC 9150 / SARB42).